The chain runs to 364 residues: UDP-N-acetylglucosamine--N-acetylmuramyl-(pentapeptide) pyrophosphoryl-undecaprenol N-acetylglucosamine transferase (364 aa).

UDP-N-acetyl-alpha-D-glucosamine-binding positions include 10 to 12 (TGG), N124, R165, S193, I248, and Q293.

It belongs to the glycosyltransferase 28 family. MurG subfamily.

It localises to the cell inner membrane. The catalysed reaction is di-trans,octa-cis-undecaprenyl diphospho-N-acetyl-alpha-D-muramoyl-L-alanyl-D-glutamyl-meso-2,6-diaminopimeloyl-D-alanyl-D-alanine + UDP-N-acetyl-alpha-D-glucosamine = di-trans,octa-cis-undecaprenyl diphospho-[N-acetyl-alpha-D-glucosaminyl-(1-&gt;4)]-N-acetyl-alpha-D-muramoyl-L-alanyl-D-glutamyl-meso-2,6-diaminopimeloyl-D-alanyl-D-alanine + UDP + H(+). The protein operates within cell wall biogenesis; peptidoglycan biosynthesis. Functionally, cell wall formation. Catalyzes the transfer of a GlcNAc subunit on undecaprenyl-pyrophosphoryl-MurNAc-pentapeptide (lipid intermediate I) to form undecaprenyl-pyrophosphoryl-MurNAc-(pentapeptide)GlcNAc (lipid intermediate II). The polypeptide is UDP-N-acetylglucosamine--N-acetylmuramyl-(pentapeptide) pyrophosphoryl-undecaprenol N-acetylglucosamine transferase (Geobacter metallireducens (strain ATCC 53774 / DSM 7210 / GS-15)).